Consider the following 493-residue polypeptide: Cytochrome P450 2A9 (493 aa).

Residue Cys438 participates in heme binding.

It belongs to the cytochrome P450 family. Heme is required as a cofactor. Liver.

The protein resides in the endoplasmic reticulum membrane. The protein localises to the microsome membrane. It carries out the reaction an organic molecule + reduced [NADPH--hemoprotein reductase] + O2 = an alcohol + oxidized [NADPH--hemoprotein reductase] + H2O + H(+). Its function is as follows. Cytochromes P450 are a group of heme-thiolate monooxygenases. In liver microsomes, this enzyme is involved in an NADPH-dependent electron transport pathway. It oxidizes a variety of structurally unrelated compounds, including steroids, fatty acids, and xenobiotics. The chain is Cytochrome P450 2A9 (CYP2A9) from Mesocricetus auratus (Golden hamster).